The sequence spans 483 residues: Glutamate--tRNA ligase (483 aa).

Positions 11 to 21 (PSPTGLLHIGN) match the 'HIGH' region motif. The 'KMSKS' region motif lies at 255 to 259 (KLSKR). Lys-258 lines the ATP pocket.

Belongs to the class-I aminoacyl-tRNA synthetase family. Glutamate--tRNA ligase type 1 subfamily. As to quaternary structure, monomer.

It localises to the cytoplasm. The enzyme catalyses tRNA(Glu) + L-glutamate + ATP = L-glutamyl-tRNA(Glu) + AMP + diphosphate. Catalyzes the attachment of glutamate to tRNA(Glu) in a two-step reaction: glutamate is first activated by ATP to form Glu-AMP and then transferred to the acceptor end of tRNA(Glu). This Lactococcus lactis subsp. cremoris (strain SK11) protein is Glutamate--tRNA ligase.